Reading from the N-terminus, the 557-residue chain is MNKLRSSAITQGVQRSPNRSMLRAVGFNDEDFNKPIIGVANGYSTITPCNMGLNKLALKAEESIKRSGGMPQMFGTITVSDGISMGTEGMKYSLVSREVIADSIETACNAQSMDGVLAIGGCDKNMPGAMIAIARMNIPSIFIYGGTIKPGKLYGEDLTVVSAFEAVGQLTSGKITEERLIQVEKNCIPGAGSCGGMFTANTMSAVIEVLGLSLPHSSTMAAEDLEKELSADKSAEILVSAIKKDIRPLDLMTKKAFENAISVIMAIGGSTNAVLHILAIANTAGIDININDFERIRQKVPVICDLKPSGKYVTVDLHKAGGIPQVMKILLNAGLIHGDCKNIEGKTISEYLQNIPDKPPTNQNVIRDIHDPLYKKGHLAILKGNLASEGSVAKISGVKNPVLTGPAKIFESEEDCLKSILNNDIKAGDVVVIRNEGPVGGPGMREMLAPTSAIVGQGLGEKVALITDGRFSGGTYGLVVGHIAPEAAVGGNIALIKEGDLITVDAVKQLIEVNLSDEELKKRKKDWVKPIQKYKRGILSKYSRIVSTSSLGAVTDL.

Residue Cys-49 coordinates [2Fe-2S] cluster. Asp-81 provides a ligand contact to Mg(2+). [2Fe-2S] cluster is bound at residue Cys-122. Positions 123 and 124 each coordinate Mg(2+). Position 124 is an N6-carboxylysine (Lys-124). Cys-194 provides a ligand contact to [2Fe-2S] cluster. Glu-446 contributes to the Mg(2+) binding site. Ser-472 (proton acceptor) is an active-site residue.

This sequence belongs to the IlvD/Edd family. As to quaternary structure, homodimer. [2Fe-2S] cluster is required as a cofactor. It depends on Mg(2+) as a cofactor.

It catalyses the reaction (2R)-2,3-dihydroxy-3-methylbutanoate = 3-methyl-2-oxobutanoate + H2O. It carries out the reaction (2R,3R)-2,3-dihydroxy-3-methylpentanoate = (S)-3-methyl-2-oxopentanoate + H2O. It participates in amino-acid biosynthesis; L-isoleucine biosynthesis; L-isoleucine from 2-oxobutanoate: step 3/4. Its pathway is amino-acid biosynthesis; L-valine biosynthesis; L-valine from pyruvate: step 3/4. Functionally, functions in the biosynthesis of branched-chain amino acids. Catalyzes the dehydration of (2R,3R)-2,3-dihydroxy-3-methylpentanoate (2,3-dihydroxy-3-methylvalerate) into 2-oxo-3-methylpentanoate (2-oxo-3-methylvalerate) and of (2R)-2,3-dihydroxy-3-methylbutanoate (2,3-dihydroxyisovalerate) into 2-oxo-3-methylbutanoate (2-oxoisovalerate), the penultimate precursor to L-isoleucine and L-valine, respectively. The polypeptide is Dihydroxy-acid dehydratase (Prochlorococcus marinus (strain MIT 9301)).